The sequence spans 174 residues: Peptide methionine sulfoxide reductase MsrA (174 aa).

Cys10 is an active-site residue.

It belongs to the MsrA Met sulfoxide reductase family.

It catalyses the reaction L-methionyl-[protein] + [thioredoxin]-disulfide + H2O = L-methionyl-(S)-S-oxide-[protein] + [thioredoxin]-dithiol. It carries out the reaction [thioredoxin]-disulfide + L-methionine + H2O = L-methionine (S)-S-oxide + [thioredoxin]-dithiol. Has an important function as a repair enzyme for proteins that have been inactivated by oxidation. Catalyzes the reversible oxidation-reduction of methionine sulfoxide in proteins to methionine. This is Peptide methionine sulfoxide reductase MsrA from Paenarthrobacter aurescens (strain TC1).